The primary structure comprises 389 residues: S-adenosylmethionine synthase (389 aa).

Histidine 17 is an ATP binding site. Aspartate 19 contacts Mg(2+). Glutamate 45 is a K(+) binding site. Glutamate 58 and glutamine 101 together coordinate L-methionine. Positions 101-111 (QSPDIAQGVTE) are flexible loop. ATP is bound by residues 168–170 (DSK), 234–235 (RF), aspartate 243, 249–250 (RK), alanine 266, and lysine 270. Residue aspartate 243 coordinates L-methionine. Residue lysine 274 participates in L-methionine binding.

The protein belongs to the AdoMet synthase family. As to quaternary structure, homotetramer; dimer of dimers. It depends on Mg(2+) as a cofactor. Requires K(+) as cofactor.

It localises to the cytoplasm. It carries out the reaction L-methionine + ATP + H2O = S-adenosyl-L-methionine + phosphate + diphosphate. It functions in the pathway amino-acid biosynthesis; S-adenosyl-L-methionine biosynthesis; S-adenosyl-L-methionine from L-methionine: step 1/1. Its function is as follows. Catalyzes the formation of S-adenosylmethionine (AdoMet) from methionine and ATP. The overall synthetic reaction is composed of two sequential steps, AdoMet formation and the subsequent tripolyphosphate hydrolysis which occurs prior to release of AdoMet from the enzyme. The protein is S-adenosylmethionine synthase of Geobacter sp. (strain M21).